The chain runs to 240 residues: Guanylate kinase (240 aa).

Residues 56-236 form the Guanylate kinase-like domain; it reads GRIFVITGPS…TLNELKSILL (181 aa). 63 to 70 provides a ligand contact to ATP; that stretch reads GPSGVGKS.

It belongs to the guanylate kinase family.

It localises to the cytoplasm. The enzyme catalyses GMP + ATP = GDP + ADP. Essential for recycling GMP and indirectly, cGMP. This Mycoplasma genitalium (strain ATCC 33530 / DSM 19775 / NCTC 10195 / G37) (Mycoplasmoides genitalium) protein is Guanylate kinase (gmk).